Here is a 449-residue protein sequence, read N- to C-terminus: UDP-N-acetylglucosamine 1-carboxyvinyltransferase (449 aa).

51-52 (KN) is a binding site for phosphoenolpyruvate. Residue R121 participates in UDP-N-acetyl-alpha-D-glucosamine binding. Residue C145 is the Proton donor of the active site. 2-(S-cysteinyl)pyruvic acid O-phosphothioketal is present on C145. Residues 150–154 (RPVDQ), D333, and I355 each bind UDP-N-acetyl-alpha-D-glucosamine.

It belongs to the EPSP synthase family. MurA subfamily.

It is found in the cytoplasm. The enzyme catalyses phosphoenolpyruvate + UDP-N-acetyl-alpha-D-glucosamine = UDP-N-acetyl-3-O-(1-carboxyvinyl)-alpha-D-glucosamine + phosphate. It participates in cell wall biogenesis; peptidoglycan biosynthesis. Functionally, cell wall formation. Adds enolpyruvyl to UDP-N-acetylglucosamine. The protein is UDP-N-acetylglucosamine 1-carboxyvinyltransferase of Burkholderia mallei (strain ATCC 23344).